Consider the following 465-residue polypeptide: Botryococcus squalene synthase (465 aa).

NADP(+) is bound by residues Arg-48 and Arg-73. Mg(2+) contacts are provided by Asp-76, Glu-79, and Asp-80. NADP(+) is bound by residues Arg-215, Lys-315, and Arg-317. 2 helical membrane passes run 395–415 (AIRL…FNLG) and 429–449 (ILDL…LLVL).

This sequence belongs to the phytoene/squalene synthase family.

Its subcellular location is the membrane. The catalysed reaction is presqualene diphosphate + NADPH + H(+) = squalene + diphosphate + NADP(+). In terms of biological role, produces squalene when coexpressed with SSL-1 and bisfarnesyl ether and a very small amount of squalene when incubated alone in the presence of NADPH. This Botryococcus braunii (Green alga) protein is Botryococcus squalene synthase (SSL-2).